The primary structure comprises 290 residues: Fructose-bisphosphate aldolase (290 aa).

A D-glyceraldehyde 3-phosphate-binding site is contributed by Ser51. Asp86 functions as the Proton donor in the catalytic mechanism. Residues His87, Asp107, Glu137, and His179 each contribute to the Zn(2+) site. Gly180 provides a ligand contact to dihydroxyacetone phosphate. His208 provides a ligand contact to Zn(2+). Residues 209-211 and 230-233 contribute to the dihydroxyacetone phosphate site; these read GGS and NINT.

This sequence belongs to the class II fructose-bisphosphate aldolase family. Homodimer. Requires Zn(2+) as cofactor.

It carries out the reaction beta-D-fructose 1,6-bisphosphate = D-glyceraldehyde 3-phosphate + dihydroxyacetone phosphate. Its pathway is carbohydrate degradation; glycolysis; D-glyceraldehyde 3-phosphate and glycerone phosphate from D-glucose: step 4/4. Its function is as follows. Catalyzes the aldol condensation of dihydroxyacetone phosphate (DHAP or glycerone-phosphate) with glyceraldehyde 3-phosphate (G3P) to form fructose 1,6-bisphosphate (FBP) in gluconeogenesis and the reverse reaction in glycolysis. In Ureaplasma parvum serovar 3 (strain ATCC 700970), this protein is Fructose-bisphosphate aldolase (fba).